A 43-amino-acid polypeptide reads, in one-letter code: Protein PsbN (43 aa).

A helical transmembrane segment spans residues 5–25 (LILSIFIFSLLLGITSYSIYI).

Belongs to the PsbN family.

It localises to the plastid. It is found in the chloroplast thylakoid membrane. Its function is as follows. May play a role in photosystem I and II biogenesis. The polypeptide is Protein PsbN (Cyanidium caldarium (Red alga)).